Here is a 23-residue protein sequence, read N- to C-terminus: ADSLDWREKGVVNSIKDQAQXGS.

Residues 1–10 are compositionally biased toward basic and acidic residues; it reads ADSLDWREKG. The tract at residues 1-23 is disordered; the sequence is ADSLDWREKGVVNSIKDQAQXGS.

The protein belongs to the peptidase C1 family.

The sequence is that of Cysteine proteinase from Tritrichomonas foetus (Trichomonas foetus).